Consider the following 239-residue polypeptide: Large ribosomal subunit protein uL2 (239 aa).

2 disordered regions span residues 1–21 and 203–239; these read MGKS…KSPS and PFGG…GRRK. The segment covering 222–239 has biased composition (basic residues); it reads PPGRKVGHIAARRTGRRK.

This sequence belongs to the universal ribosomal protein uL2 family. In terms of assembly, part of the 50S ribosomal subunit. Forms a bridge to the 30S subunit in the 70S ribosome.

One of the primary rRNA binding proteins. Required for association of the 30S and 50S subunits to form the 70S ribosome, for tRNA binding and peptide bond formation. It has been suggested to have peptidyltransferase activity; this is somewhat controversial. Makes several contacts with the 16S rRNA in the 70S ribosome. The sequence is that of Large ribosomal subunit protein uL2 from Pyrococcus furiosus (strain ATCC 43587 / DSM 3638 / JCM 8422 / Vc1).